The primary structure comprises 60 residues: Large ribosomal subunit protein uL30 (60 aa).

This sequence belongs to the universal ribosomal protein uL30 family. Part of the 50S ribosomal subunit.

This is Large ribosomal subunit protein uL30 from Cupriavidus necator (strain ATCC 17699 / DSM 428 / KCTC 22496 / NCIMB 10442 / H16 / Stanier 337) (Ralstonia eutropha).